Consider the following 411-residue polypeptide: Secretion apparatus protein BsaZ (411 aa).

4 consecutive transmembrane segments (helical) span residues 28–48 (IVAL…VDLT), 80–100 (IAAP…LVQS), 137–157 (ALLY…LYHA), and 175–195 (IVLT…VLIL). The interval 341–411 (AANRGGPPPE…APARTGDQNA (71 aa)) is disordered. Residues 370-404 (DACADNAFPDDAPPGAAAPNAGSPDGPAPDGGAPA) show a composition bias toward low complexity.

Belongs to the type III secretion exporter family.

The protein resides in the cell membrane. Its function is as follows. Part of the bsa type III secretion system, is involved in the intracellular replication of invading bacteria inside the host cell. Probably necessary for the lysis of the vacuole membrane and escape into the host cell cytoplasm. This is Secretion apparatus protein BsaZ (bsaZ) from Burkholderia pseudomallei (strain K96243).